Consider the following 432-residue polypeptide: D-amino acid dehydrogenase (432 aa).

Residue 3-17 (VVILGSGVVGVTSAW) coordinates FAD.

The protein belongs to the DadA oxidoreductase family. The cofactor is FAD.

Its subcellular location is the cell inner membrane. It catalyses the reaction a D-alpha-amino acid + A + H2O = a 2-oxocarboxylate + AH2 + NH4(+). The protein operates within amino-acid degradation; D-alanine degradation; NH(3) and pyruvate from D-alanine: step 1/1. Oxidative deamination of D-amino acids. The chain is D-amino acid dehydrogenase from Salmonella typhi.